The sequence spans 171 residues: Neuronal vesicle trafficking-associated protein 2 (171 aa).

Residues 1–21 (MVKLNSNPGEKGAKPPSVEDG) form a disordered region. Over 1–71 (MVKLNSNPGE…FRVPKIAEFT (71 aa)) the chain is Cytoplasmic. The helical; Signal-anchor for type II membrane protein transmembrane segment at 72–92 (VTILVSLALAFLACIVFLVVY) threads the bilayer. Over 93–171 (KAFTYDHSCP…EPKPPKTQGH (79 aa)) the chain is Lumenal.

Belongs to the NSG family. As to expression, specifically expressed in neural and neuroendocrine tissues. Pituitary and less in adrenal gland and testis. Expressed in the hippocampus throughout development. Remains enriched in layer V cortical neurons during development. At P0, broadly expressed in the neocortex. Is down-regulated overall at P8 and P14, but remains relatively enriched in layer V. At P0 is lower expressed in the cerebellum. Expression remains low throughout development, and is undetectable by adulthood.

The protein localises to the membrane. It localises to the golgi apparatus. Its subcellular location is the trans-Golgi network membrane. The protein resides in the cell projection. It is found in the dendrite. The protein localises to the endosome membrane. It localises to the early endosome membrane. Its subcellular location is the late endosome membrane. The protein resides in the lysosome lumen. It is found in the cytoplasmic vesicle membrane. The protein localises to the golgi stack membrane. It localises to the endosome. Its subcellular location is the multivesicular body membrane. The chain is Neuronal vesicle trafficking-associated protein 2 from Mus musculus (Mouse).